We begin with the raw amino-acid sequence, 282 residues long: MAGAGLIGIRRRIKSVTNIRKITKAMGLVSTAKLRKARVNLEINKKYYNEYKVILKDIINFIEDSNIYIDGNGSHKKLYVIFTSDSGLCGSFNINIINNVINEIKEDKENSLVIVIGQKGRMYLKKLGINTLAEYIEIPDVPTTKEARTIAKNIIKLYSSKEVGEVFLVYSEFYSPVKQQVLINKILPFTKENKSDNKYIEFNPPVTQFIDEILENYLKATILNCFSNSKASENGSRMTAMNGATDNANDLLDNLDLQFNRLRQSAITQEISEIVGGAEAQR.

This sequence belongs to the ATPase gamma chain family. As to quaternary structure, F-type ATPases have 2 components, CF(1) - the catalytic core - and CF(0) - the membrane proton channel. CF(1) has five subunits: alpha(3), beta(3), gamma(1), delta(1), epsilon(1). CF(0) has three main subunits: a, b and c.

It is found in the cell membrane. Produces ATP from ADP in the presence of a proton gradient across the membrane. The gamma chain is believed to be important in regulating ATPase activity and the flow of protons through the CF(0) complex. This chain is ATP synthase gamma chain, found in Clostridium botulinum (strain Okra / Type B1).